Reading from the N-terminus, the 602-residue chain is Transcription termination factor Rho (602 aa).

2 disordered regions span residues 1–35 (MTDT…EPAG) and 76–216 (ANGA…AEAE). Positions 85 to 96 (SAQEHDKGDRPP) are enriched in basic and acidic residues. The span at 100–120 (APATQGEQTPTEQIDSQSQQV) shows a compositional bias: polar residues. Residues 172–182 (GDQQASGGQQA) show a composition bias toward low complexity. The segment covering 183 to 192 (RGDEDGEARQ) has biased composition (basic and acidic residues). Positions 193 to 206 (GRRGRRFRDRRRRG) are enriched in basic residues. Residues 223–301 (VQPVAGILDV…VRLDSINGGS (79 aa)) form the Rho RNA-BD domain. ATP-binding positions include 344-349 (GKGQRA), 356-361 (KAGKTT), and Arg-387.

This sequence belongs to the Rho family. In terms of assembly, homohexamer. The homohexamer assembles into an open ring structure.

Its function is as follows. Facilitates transcription termination by a mechanism that involves Rho binding to the nascent RNA, activation of Rho's RNA-dependent ATPase activity, and release of the mRNA from the DNA template. This is Transcription termination factor Rho from Mycobacterium bovis (strain ATCC BAA-935 / AF2122/97).